The sequence spans 558 residues: MHAGGKYCGPRHCSFYIIAFLICQLFFLVIFIRNDDASSANELLSFMNESEESDHLDWRVFISHTPETSEDFYQYNIHLSNALGLIRKLPVTRHHSCTTRNSILPAPLEANVSVVISFHNEARSMLLRTIVSLLSRSPEDYLHELILVDDGSQRDVTLLDDLKRWMGGVFGSRYRLGLTFLRNQERMGLIWSRNRGASLASGRYVLFLDSHCEVNEGWLEPLLERLALNTNLAVSPLLDPIDPTTLSYRKGNELLKGGFDWSLHFHWLKRQLTNQESLEMPYQSPAFAGGVLMMSREWFLKLGSFNPYLKIWGGESIELAIKLWLCGGQIEIVPCSRIGHIFRRRHAFDFPPQSDRQLSPAQETYLHNSKIIAESWLDEYKNMFYALRPAARRIPLDHTYDELQRMRKERRCHPFEWYLRHVSPELRMHFDELSATGTLRNEDRCVHARQKDSQPILASCYLSDITQWSMLRQSGQLSTHRELCLAVGFGMRIALEPCGRNETVRRSQRWVRLGTHLLHAESHLCLDNPLKDRLEMSTCRSHAVSQSFQFALEMEGQT.

The Cytoplasmic portion of the chain corresponds to 1 to 12 (MHAGGKYCGPRH). A helical; Signal-anchor for type II membrane protein transmembrane segment spans residues 13–32 (CSFYIIAFLICQLFFLVIFI). At 33–558 (RNDDASSANE…QFALEMEGQT (526 aa)) the chain is on the lumenal side. N-linked (GlcNAc...) asparagine glycosylation is found at Asn-48 and Asn-111. Cystine bridges form between Cys-97/Cys-335, Cys-326/Cys-412, Cys-445/Cys-460, and Cys-484/Cys-498. The tract at residues 109-225 (EANVSVVISF…EGWLEPLLER (117 aa)) is catalytic subdomain A. 2 residues coordinate substrate: Asp-150 and Arg-186. Asp-209 is a Mn(2+) binding site. A substrate-binding site is contributed by Ser-210. His-211 is a Mn(2+) binding site. Residues 281–343 (PYQSPAFAGG…PCSRIGHIFR (63 aa)) are catalytic subdomain B. Position 312 (Trp-312) interacts with substrate. His-340 provides a ligand contact to Mn(2+). Residues Arg-343 and His-346 each contribute to the substrate site. The Ricin B-type lectin domain occupies 422-556 (VSPELRMHFD…SFQFALEMEG (135 aa)). Residue Asn-501 is glycosylated (N-linked (GlcNAc...) asparagine). Cys-525 and Cys-539 form a disulfide bridge.

Belongs to the glycosyltransferase 2 family. GalNAc-T subfamily. Mn(2+) is required as a cofactor. In terms of tissue distribution, during embryonic stages 16-17, very weak expression in the midgut.

The protein resides in the golgi apparatus membrane. It catalyses the reaction L-seryl-[protein] + UDP-N-acetyl-alpha-D-galactosamine = a 3-O-[N-acetyl-alpha-D-galactosaminyl]-L-seryl-[protein] + UDP + H(+). The catalysed reaction is L-threonyl-[protein] + UDP-N-acetyl-alpha-D-galactosamine = a 3-O-[N-acetyl-alpha-D-galactosaminyl]-L-threonyl-[protein] + UDP + H(+). It functions in the pathway protein modification; protein glycosylation. In terms of biological role, may catalyze the initial reaction in O-linked oligosaccharide biosynthesis, the transfer of an N-acetyl-D-galactosamine residue to a serine or threonine residue on the protein receptor. In Drosophila melanogaster (Fruit fly), this protein is Putative polypeptide N-acetylgalactosaminyltransferase 13 (pgant13).